A 333-amino-acid polypeptide reads, in one-letter code: G-protein coupled receptor 146 (333 aa).

Residues 1-22 lie on the Extracellular side of the membrane; the sequence is MWSCGPLNSTAWAEEPLCRNLR. Asn-8 carries an N-linked (GlcNAc...) asparagine glycan. A helical membrane pass occupies residues 23–43; the sequence is LGLWVLSLLYLGAGVPVSLGY. Topologically, residues 44–64 are cytoplasmic; that stretch reads NALLVLANLASKNTMTMPDVY. Residues 65-85 form a helical membrane-spanning segment; it reads FVNMAVAGLVLTALAPAYLLG. The Extracellular portion of the chain corresponds to 86–101; it reads PAHSRWALWSLSSEAH. A helical membrane pass occupies residues 102–122; it reads VTLLILFNVASLVTMYSTALL. At 123–145 the chain is on the cytoplasmic side; that stretch reads SLDYYIERALPRTYMASVYNTRH. A helical membrane pass occupies residues 146 to 166; sequence VCGFVWGGAVLTSFSSLLFYI. At 167-188 the chain is on the extracellular side; that stretch reads CSHVSSRIAECARMQNTEAADA. Residues 189–209 traverse the membrane as a helical segment; sequence ILVLIGYVVPGLAVLYALALI. Over 210-232 the chain is Cytoplasmic; sequence SRIGKEDTPLDQDTSRLDPSVHR. The chain crosses the membrane as a helical span at residues 233–253; the sequence is LLVATVCTQFGLWTPYYLSLG. Residues 254–277 are Extracellular-facing; sequence HTVLTSRGRTVEGHYLGILQVAKD. The helical transmembrane segment at 278–298 threads the bilayer; the sequence is LAKFLAFSSSSVTPLLYRYIN. The Cytoplasmic portion of the chain corresponds to 299–333; sequence KAFPGKLRRLMKKMHCGRRHCSPDPSGIQQVMAQA.

This sequence belongs to the G-protein coupled receptor 1 family.

It localises to the cell membrane. Functionally, GPCR receptor required for the regulation of plasma cholesterol levels. Receptor for CHLSN, a gut derived hormone which mediates an inhibitory effect of intestinal cholesterol absorption on hepatic cholesterol synthesis. Cholesin-binding exerts an antagonistic effect by inhibiting PKA signaling and suppressing SREBF2-controlled cholesterol in the liver. The sequence is that of G-protein coupled receptor 146 (Gpr146) from Mus musculus (Mouse).